The sequence spans 58 residues: Large ribosomal subunit protein uL30 (58 aa).

This sequence belongs to the universal ribosomal protein uL30 family. As to quaternary structure, part of the 50S ribosomal subunit.

In Novosphingobium aromaticivorans (strain ATCC 700278 / DSM 12444 / CCUG 56034 / CIP 105152 / NBRC 16084 / F199), this protein is Large ribosomal subunit protein uL30.